Here is a 266-residue protein sequence, read N- to C-terminus: Glucosamine-6-phosphate deaminase (266 aa).

Residue Asp-72 is the Proton acceptor; for enolization step of the active site. The active-site For ring-opening step is Asp-141. The active-site Proton acceptor; for ring-opening step is the His-143. Residue Glu-148 is the For ring-opening step of the active site.

This sequence belongs to the glucosamine/galactosamine-6-phosphate isomerase family. NagB subfamily. Homohexamer.

The enzyme catalyses alpha-D-glucosamine 6-phosphate + H2O = beta-D-fructose 6-phosphate + NH4(+). The protein operates within amino-sugar metabolism; N-acetylneuraminate degradation; D-fructose 6-phosphate from N-acetylneuraminate: step 5/5. Its activity is regulated as follows. Allosterically activated by N-acetylglucosamine 6-phosphate (GlcNAc6P). Catalyzes the reversible isomerization-deamination of glucosamine 6-phosphate (GlcN6P) to form fructose 6-phosphate (Fru6P) and ammonium ion. The protein is Glucosamine-6-phosphate deaminase of Yersinia enterocolitica serotype O:8 / biotype 1B (strain NCTC 13174 / 8081).